We begin with the raw amino-acid sequence, 73 residues long: MGLSWQQLLILLLVVVVIFGTKKLRNIGSDLGGAVKDFKKAMNDDQPKDAEFKKISEEVEQTSVENSKQKEQA.

The helical transmembrane segment at 1-21 (MGLSWQQLLILLLVVVVIFGT) threads the bilayer.

Belongs to the TatA/E family. As to quaternary structure, the Tat system comprises two distinct complexes: a TatABC complex, containing multiple copies of TatA, TatB and TatC subunits, and a separate TatA complex, containing only TatA subunits. Substrates initially bind to the TatABC complex, which probably triggers association of the separate TatA complex to form the active translocon.

The protein resides in the cell inner membrane. Functionally, part of the twin-arginine translocation (Tat) system that transports large folded proteins containing a characteristic twin-arginine motif in their signal peptide across membranes. TatA could form the protein-conducting channel of the Tat system. In Histophilus somni (strain 129Pt) (Haemophilus somnus), this protein is Sec-independent protein translocase protein TatA.